Here is a 254-residue protein sequence, read N- to C-terminus: Type III pantothenate kinase (254 aa).

Position 6–13 (6–13 (DVGNTNTT)) interacts with ATP. Residues Tyr100 and 107–110 (GADR) each bind substrate. Catalysis depends on Asp109, which acts as the Proton acceptor. Asp129 contacts K(+). Thr132 serves as a coordination point for ATP. Thr184 serves as a coordination point for substrate.

The protein belongs to the type III pantothenate kinase family. Homodimer. NH4(+) serves as cofactor. K(+) is required as a cofactor.

It localises to the cytoplasm. It carries out the reaction (R)-pantothenate + ATP = (R)-4'-phosphopantothenate + ADP + H(+). The protein operates within cofactor biosynthesis; coenzyme A biosynthesis; CoA from (R)-pantothenate: step 1/5. Its function is as follows. Catalyzes the phosphorylation of pantothenate (Pan), the first step in CoA biosynthesis. The polypeptide is Type III pantothenate kinase (Anaeromyxobacter dehalogenans (strain 2CP-1 / ATCC BAA-258)).